We begin with the raw amino-acid sequence, 424 residues long: Deoxyguanosinetriphosphate triphosphohydrolase-like protein (424 aa).

Residues 1–27 (MYPYSDADAFRRQPERAKSSQLRTSAV) form a disordered region. The span at 8–18 (DAFRRQPERAK) shows a compositional bias: basic and acidic residues. In terms of domain architecture, HD spans 67–217 (RLTHSLEVAQ…MDFSDDIAYS (151 aa)).

It belongs to the dGTPase family. Type 2 subfamily.

The protein is Deoxyguanosinetriphosphate triphosphohydrolase-like protein (dgt) of Corynebacterium glutamicum (strain ATCC 13032 / DSM 20300 / JCM 1318 / BCRC 11384 / CCUG 27702 / LMG 3730 / NBRC 12168 / NCIMB 10025 / NRRL B-2784 / 534).